A 77-amino-acid polypeptide reads, in one-letter code: uncharacterized protein (77 aa).

This is an uncharacterized protein from Vaccinia virus (strain Copenhagen) (VACV).